Here is a 282-residue protein sequence, read N- to C-terminus: Complement component 1 Q subcomponent-binding protein, mitochondrial (282 aa).

Residues 1–73 constitute a mitochondrion transit peptide; it reads MLPLLRCVPR…PCACGCGCGS (73 aa). The segment at 76–93 is C1q binding; sequence TDGDKAFVDFLSDEIKEE. At Ser-87 the chain carries Phosphoserine. Lys-91 carries the N6-acetyllysine modification. The tract at residues 138 to 164 is disordered; it reads SIPPTFDGEEEPSQGQKVEEQEPELTS. The interaction with MAVS stretch occupies residues 168–213; sequence FVVEVIKNDDGKKALVLDCHYPEDEVGQEDEAESDIFSIREVSFQS. Phosphotyrosine is present on Tyr-188. Ser-201 and Ser-205 each carry phosphoserine. Position 214 is a phosphothreonine (Thr-214).

It belongs to the MAM33 family. Homotrimer; three monomers form a donut-shaped structure with an unusually asymmetric charge distribution on the surface. Interacts with CDK13, HRK, VTN, NFYB, ADRA1B, FOXC1, DDX21, DDX50, NCL, SRSF1, SRSF9 and CDKN2A isoform smARF. Interacts with CD93; the association may represent a cell surface C1q receptor. Interacts with KRT1; the association represents a cell surface kininogen receptor. Interacts with CD209; the interaction is indicative for a C1q:C1QBP:CD209 signaling complex. Interacts with FBL and RRP1; the respective interactions with C1QBP are competitive. Probably associates with the mitoribosome. Interacts with MAVS; the interaction occurs upon viral transfection. Interacts with PPIF. Interacts with U2AF1L4. Interacts with PLEKHN1. Interacts with VGF-derived peptide TLQP-21. Interacts with POLGARF which is produced from an alternative reading frame of the POLG gene; the interaction results in nucleolar localization of C1QBP, probably due to prevention of C1QBP maturation and redirection from mitochondria to nucleoli. Interacts with MRE11 and RAD50; forming the MRC (MRE11-RAD50-C1QBP) complex that inhibits the activity of MRE11. In terms of assembly, (Microbial infection) Interacts with Rubella virus capsid protein; the interaction occurs in mitochondria. Interacts with Rubella virus protease/methyltransferase p150. As to quaternary structure, (Microbial infection) Interacts with Staphylococcus aureus protein A/spa. (Microbial infection) Interacts with Staphylococcus aureus protein A/spa, HIV-1 Tat and HCV core protein. In terms of assembly, (Microbial infection) Interacts with HIV-1 Tat and HCV core protein. As to quaternary structure, (Microbial infection) Interacts with L.monocytogenes internalin B. (Microbial infection) Interacts with Epstein-Barr virus EBNA1. Expressed on cell surface of peripheral blood cells (at protein level); Surface expression is reported for macrophages and monocyte-derived dendritic cells.

The protein resides in the mitochondrion matrix. The protein localises to the nucleus. Its subcellular location is the nucleolus. It localises to the cell membrane. It is found in the secreted. The protein resides in the cytoplasm. In terms of biological role, multifunctional and multicompartmental protein involved in inflammation and infection processes, ribosome biogenesis, protein synthesis in mitochondria, regulation of apoptosis, transcriptional regulation and pre-mRNA splicing. At the cell surface is thought to act as an endothelial receptor for plasma proteins of the complement and kallikrein-kinin cascades. Putative receptor for C1q; specifically binds to the globular 'heads' of C1q thus inhibiting C1; may perform the receptor function through a complex with C1qR/CD93. In complex with cytokeratin-1/KRT1 is a high affinity receptor for kininogen-1/HMWK. Can also bind other plasma proteins, such as coagulation factor XII leading to its autoactivation. May function to bind initially fluid kininogen-1 to the cell membrane. The secreted form may enhance both extrinsic and intrinsic coagulation pathways. It is postulated that the cell surface form requires docking with transmembrane proteins for downstream signaling which might be specific for a cell-type or response. By acting as C1q receptor is involved in chemotaxis of immature dendritic cells and neutrophils and is proposed to signal through CD209/DC-SIGN on immature dendritic cells, through integrin alpha-4/beta-1 during trophoblast invasion of the decidua, and through integrin beta-1 during endothelial cell adhesion and spreading. Signaling involved in inhibition of innate immune response is implicating the PI3K-AKT/PKB pathway. Required for protein synthesis in mitochondria. In mitochondrial translation may be involved in formation of functional 55S mitoribosomes; the function seems to involve its RNA-binding activity. Acts as a RNA modification reader, which specifically recognizes and binds mitochondrial RNAs modified by C5-methylcytosine (m5C) in response to stress, and promotes recruitment of the mitochondrial degradosome complex, leading to their degradation. May be involved in the nucleolar ribosome maturation process; the function may involve the exchange of FBL for RRP1 in the association with pre-ribosome particles. Involved in regulation of RNA splicing by inhibiting the RNA-binding capacity of SRSF1 and its phosphorylation. Is required for the nuclear translocation of splicing factor U2AF1L4. Involved in regulation of CDKN2A- and HRK-mediated apoptosis. Stabilizes mitochondrial CDKN2A isoform smARF. May be involved in regulation of FOXC1 transcriptional activity and NFY/CCAAT-binding factor complex-mediated transcription. May play a role in antibacterial defense as it can bind to cell surface hyaluronan and inhibit Streptococcus pneumoniae hyaluronate lyase. May be involved in modulation of the immune response; ligation by HCV core protein is resulting in suppression of interleukin-12 production in monocyte-derived dendritic cells. Involved in regulation of antiviral response by inhibiting RIGI- and IFIH1-mediated signaling pathways probably involving its association with MAVS after viral infection. Acts as a regulator of DNA repair via homologous recombination by inhibiting the activity of MRE11: interacts with unphosphorylated MRE11 and RAD50 in absence of DNA damage, preventing formation and activity of the MRN complex. Following DNA damage, dissociates from phosphorylated MRE11, allowing formation of the MRN complex. (Microbial infection) Involved in HIV-1 replication, presumably by contributing to splicing of viral RNA. Its function is as follows. (Microbial infection) In infection processes acts as an attachment site for microbial proteins, including Listeria monocytogenes internalin B (InlB) and Staphylococcus aureus protein A. Functionally, (Microbial infection) Involved in replication of Rubella virus. This chain is Complement component 1 Q subcomponent-binding protein, mitochondrial (C1QBP), found in Homo sapiens (Human).